Here is a 238-residue protein sequence, read N- to C-terminus: Uridylate kinase (238 aa).

12-15 (KLSG) is an ATP binding site. The involved in allosteric activation by GTP stretch occupies residues 20 to 25 (GEKGFG). G54 contributes to the UMP binding site. The ATP site is built by G55 and R59. UMP contacts are provided by residues D72 and 133–140 (TGNPYFST). ATP-binding residues include Y166 and D169.

Belongs to the UMP kinase family. As to quaternary structure, homohexamer.

Its subcellular location is the cytoplasm. The enzyme catalyses UMP + ATP = UDP + ADP. Its pathway is pyrimidine metabolism; CTP biosynthesis via de novo pathway; UDP from UMP (UMPK route): step 1/1. Its activity is regulated as follows. Allosterically activated by GTP. Inhibited by UTP. In terms of biological role, catalyzes the reversible phosphorylation of UMP to UDP. In Clostridium botulinum (strain Langeland / NCTC 10281 / Type F), this protein is Uridylate kinase.